A 148-amino-acid polypeptide reads, in one-letter code: MNATKFVVLLVIGILCAIVTARQVKDLSTETKLGASLPKTTTKGIGAQLSATGTTYSTSSVVSYANGFNNPKGPGANSFESANTFTSGQVTAKGRKARVSSTSASAAEGDAAAAVTRKAAAARANGKVASASRVKGSSEKKKGKGKKD.

Residues 1–21 form the signal peptide; the sequence is MNATKFVVLLVIGILCAIVTA. Residues 123–132 show a composition bias toward low complexity; the sequence is RANGKVASAS. Residues 123-148 are disordered; the sequence is RANGKVASASRVKGSSEKKKGKGKKD.

Belongs to the UPF0540 family.

This Arabidopsis thaliana (Mouse-ear cress) protein is UPF0540 protein At1g62000.